We begin with the raw amino-acid sequence, 386 residues long: Galactokinase (386 aa).

Residue 35-38 (EHTD) participates in substrate binding. ATP contacts are provided by residues Ser69 and 125–131 (GAGLSSS). The Mg(2+) site is built by Ser131 and Glu163. Asp175 (proton acceptor) is an active-site residue. Tyr224 is a substrate binding site.

It belongs to the GHMP kinase family. GalK subfamily.

The protein localises to the cytoplasm. It carries out the reaction alpha-D-galactose + ATP = alpha-D-galactose 1-phosphate + ADP + H(+). It participates in carbohydrate metabolism; galactose metabolism. In terms of biological role, catalyzes the transfer of the gamma-phosphate of ATP to D-galactose to form alpha-D-galactose-1-phosphate (Gal-1-P). The sequence is that of Galactokinase from Vibrio vulnificus (strain CMCP6).